The sequence spans 222 residues: Peptidyl-prolyl cis-trans isomerase FKBP7 (222 aa).

Positions 1–23 (MPKTMHFLFRFIVFFYLWGLFTA) are cleaved as a signal peptide. N45 is a glycosylation site (N-linked (GlcNAc...) asparagine). A PPIase FKBP-type domain is found at 53 to 145 (GDLLNAHYDG…IFEIELYAVT (93 aa)). 2 EF-hand domains span residues 145–180 (TKGP…EFEK) and 189–222 (YQDA…HDEL). Ca(2+) contacts are provided by D158, D160, D162, Q164, E169, D202, D204, D206, and E213. Positions 200 to 222 (KNDHDGDGFISPKEYNVYQHDEL) are disordered. A Retention in the endoplasmic reticulum motif is present at residues 219-222 (HDEL).

In terms of processing, glycosylated.

The protein localises to the endoplasmic reticulum lumen. The enzyme catalyses [protein]-peptidylproline (omega=180) = [protein]-peptidylproline (omega=0). Its function is as follows. PPIases accelerate the folding of proteins during protein synthesis. The chain is Peptidyl-prolyl cis-trans isomerase FKBP7 (FKBP7) from Homo sapiens (Human).